The primary structure comprises 118 residues: Small ribosomal subunit protein uS13 (118 aa).

A disordered region spans residues 94 to 118; the sequence is GLPVRGQRTKTNARTRKGPRKPIKK.

It belongs to the universal ribosomal protein uS13 family. In terms of assembly, part of the 30S ribosomal subunit. Forms a loose heterodimer with protein S19. Forms two bridges to the 50S subunit in the 70S ribosome.

Functionally, located at the top of the head of the 30S subunit, it contacts several helices of the 16S rRNA. In the 70S ribosome it contacts the 23S rRNA (bridge B1a) and protein L5 of the 50S subunit (bridge B1b), connecting the 2 subunits; these bridges are implicated in subunit movement. Contacts the tRNAs in the A and P-sites. The sequence is that of Small ribosomal subunit protein uS13 from Haemophilus ducreyi (strain 35000HP / ATCC 700724).